A 1524-amino-acid polypeptide reads, in one-letter code: DNA-directed RNA polymerase subunit beta' (1524 aa).

C58, C60, C73, and C76 together coordinate Zn(2+). Positions 739, 741, and 743 each coordinate Mg(2+). Residues C1112, C1194, C1201, and C1204 each contribute to the Zn(2+) site. Residues 1501–1524 (EAVEAKERPAARRGVKREQPGKQA) are disordered.

Belongs to the RNA polymerase beta' chain family. The RNAP catalytic core consists of 2 alpha, 1 beta, 1 beta' and 1 omega subunit. When a sigma factor is associated with the core the holoenzyme is formed, which can initiate transcription. Requires Mg(2+) as cofactor. Zn(2+) serves as cofactor.

The catalysed reaction is RNA(n) + a ribonucleoside 5'-triphosphate = RNA(n+1) + diphosphate. Its function is as follows. DNA-dependent RNA polymerase catalyzes the transcription of DNA into RNA using the four ribonucleoside triphosphates as substrates. The chain is DNA-directed RNA polymerase subunit beta' from Thermus thermophilus (strain ATCC BAA-163 / DSM 7039 / HB27).